The primary structure comprises 195 residues: Myelin-associated neurite-outgrowth inhibitor (195 aa).

Position 1 is an N-acetylmethionine (M1). Over 1–18 the chain is Cytoplasmic; that stretch reads MNPVYSPGSSGVPYANAK. Phosphoserine is present on S6. A helical transmembrane segment spans residues 19–42; the sequence is GIGYPAGFPMGYAAAAPAYSPNMY. At 43-142 the chain is on the extracellular side; sequence PGANPTFQTG…PAPIPPPRGN (100 aa). An N-linked (GlcNAc...) asparagine glycan is attached at N46. A helical transmembrane segment spans residues 143-164; the sequence is GVTMGMVAGTTMAMSAGTLLTA. Residues 165–195 lie on the Cytoplasmic side of the membrane; sequence HSPTPVAPHPVTVPTYRAPGTPTYSYVPPQW.

The protein belongs to the FAM168 family. As to quaternary structure, may form homodimers. May interact with DAZAP2, FAM168A, PRDX6, RBM6, TMTC1 and YPEL2. Interacts with CDC27. N-glycosylated. Expressed in the brain, within neuronal axonal fibers and associated with myelin sheets (at protein level). Expression tends to be lower in the brain of Alzheimer disease patients compared to healthy individuals (at protein level).

It localises to the cytoplasm. Its subcellular location is the perinuclear region. It is found in the cell membrane. The protein localises to the cell projection. The protein resides in the axon. Its function is as follows. Inhibitor of neuronal axonal outgrowth. Acts as a negative regulator of CDC42 and STAT3 and a positive regulator of STMN2. Positive regulator of CDC27. This chain is Myelin-associated neurite-outgrowth inhibitor (FAM168B), found in Homo sapiens (Human).